A 554-amino-acid chain; its full sequence is DDB1- and CUL4-associated factor 11 homolog (554 aa).

The segment at 24–52 is disordered; it reads QRMKNRNDSDTDFSDDDEETSGGCPKMTP. Residues 33-43 show a composition bias toward acidic residues; the sequence is DTDFSDDDEET. 5 WD repeats span residues 245-284, 288-328, 336-375, 414-458, and 461-500; these read QNQC…RIRT, AHED…DGDV, GHRD…CQGG, GHSV…VSRR, and GHQA…EGVI. The interval 527–554 is disordered; the sequence is PQRKLRKPISARNAKCPTTSSEPDDFQI.

The protein belongs to the WD repeat LEC14B family.

Involved in regulation of lifespan. Required for dopaminergic CEP neuron degeneration in response to Mn(2+). The polypeptide is DDB1- and CUL4-associated factor 11 homolog (wdr-23) (Caenorhabditis briggsae).